The following is a 62-amino-acid chain: MKASELRAKSVDELKTELLSLLKAQFGLRMQLATQQLAKTSELKKVRRDIARVRTILSEKAA.

The protein belongs to the universal ribosomal protein uL29 family.

The protein is Large ribosomal subunit protein uL29 of Laribacter hongkongensis (strain HLHK9).